We begin with the raw amino-acid sequence, 293 residues long: Nucleotide-binding protein LBA0691 (293 aa).

ATP is bound at residue 13 to 20 (GMSGAGKT). Residue 63–66 (DLRV) coordinates GTP.

Belongs to the RapZ-like family.

In terms of biological role, displays ATPase and GTPase activities. The protein is Nucleotide-binding protein LBA0691 of Lactobacillus acidophilus (strain ATCC 700396 / NCK56 / N2 / NCFM).